Here is a 166-residue protein sequence, read N- to C-terminus: ATP synthase subunit b (166 aa).

Residues 15-37 (TLYYLLIFAALLLLVKHFAWGPV) traverse the membrane as a helical segment.

The protein belongs to the ATPase B chain family. In terms of assembly, F-type ATPases have 2 components, F(1) - the catalytic core - and F(0) - the membrane proton channel. F(1) has five subunits: alpha(3), beta(3), gamma(1), delta(1), epsilon(1). F(0) has three main subunits: a(1), b(2) and c(10-14). The alpha and beta chains form an alternating ring which encloses part of the gamma chain. F(1) is attached to F(0) by a central stalk formed by the gamma and epsilon chains, while a peripheral stalk is formed by the delta and b chains.

The protein localises to the cell membrane. Its function is as follows. F(1)F(0) ATP synthase produces ATP from ADP in the presence of a proton or sodium gradient. F-type ATPases consist of two structural domains, F(1) containing the extramembraneous catalytic core and F(0) containing the membrane proton channel, linked together by a central stalk and a peripheral stalk. During catalysis, ATP synthesis in the catalytic domain of F(1) is coupled via a rotary mechanism of the central stalk subunits to proton translocation. Component of the F(0) channel, it forms part of the peripheral stalk, linking F(1) to F(0). This is ATP synthase subunit b from Lactobacillus gasseri (strain ATCC 33323 / DSM 20243 / BCRC 14619 / CIP 102991 / JCM 1131 / KCTC 3163 / NCIMB 11718 / NCTC 13722 / AM63).